We begin with the raw amino-acid sequence, 1181 residues long: WD repeat-containing protein 35 (1181 aa).

6 WD repeats span residues 4–43, 61–100, 105–143, 147–185, 193–241, and 246–288; these read YLSK…VLKL, LSMN…VWML, WIEE…IVGS, NRIW…IYDN, MKLS…IMRH, and NPVL…IVQF.

As to quaternary structure, component of the IFT complex A (IFT-A) complex. IFT-A complex is divided into a core subcomplex composed of IFT122:IFT140:WDR19 which is associated with TULP3 and a peripheral subcomplex composed of IFT43:WDR35:TTC21B. Interacts directy with IFT122, ITF43 and TTC21B. Interacts with IFT43. Interacts with CFAP61.

It is found in the cytoplasm. The protein localises to the cytoskeleton. It localises to the microtubule organizing center. Its subcellular location is the centrosome. The protein resides in the cilium axoneme. It is found in the cilium basal body. Its function is as follows. As a component of the IFT complex A (IFT-A), a complex required for retrograde ciliary transport and entry into cilia of G protein-coupled receptors (GPCRs), it is involved in ciliogenesis and ciliary protein trafficking. May promote CASP3 activation and TNF-stimulated apoptosis. The polypeptide is WD repeat-containing protein 35 (Homo sapiens (Human)).